Here is a 342-residue protein sequence, read N- to C-terminus: MSKAYEQSGVNIHAGYEAVERMSSHVKRTMRKEVIGGLGGFGATFDLSQLNMTAPVLVSGTDGVGTKLKLAIDYGKHDSIGIDAVAMCVNDILTTGAEPLYFLDYIATNKVVPEVIEQIVKGISDACVETNTALIGGETAEMGEMYHEGEYDVAGFAVGAVEKDDYVDGSEVKEGQVVIGLASSGIHSNGYSLVRKLINESGIDLASNFDNRPFIDVFLEPTKLYVKPVLALKKEVSIKAMNHITGGGFYENIPRALPAGYAARIDTTSFPTPKIFDWLQQQGNIDTNEMYNIFNMGIGYTVIVDEKDASRALKILAEQNVEAYQIGHIVKNESTAIELLGV.

It belongs to the AIR synthase family.

The protein resides in the cytoplasm. It catalyses the reaction 2-formamido-N(1)-(5-O-phospho-beta-D-ribosyl)acetamidine + ATP = 5-amino-1-(5-phospho-beta-D-ribosyl)imidazole + ADP + phosphate + H(+). It participates in purine metabolism; IMP biosynthesis via de novo pathway; 5-amino-1-(5-phospho-D-ribosyl)imidazole from N(2)-formyl-N(1)-(5-phospho-D-ribosyl)glycinamide: step 2/2. In Staphylococcus aureus (strain Mu3 / ATCC 700698), this protein is Phosphoribosylformylglycinamidine cyclo-ligase.